The sequence spans 215 residues: 3-demethoxyubiquinol 3-hydroxylase (215 aa).

The Fe cation site is built by glutamate 64, glutamate 94, histidine 97, glutamate 146, glutamate 178, and histidine 181.

It belongs to the COQ7 family. Requires Fe cation as cofactor.

It is found in the cell membrane. The catalysed reaction is a 5-methoxy-2-methyl-3-(all-trans-polyprenyl)benzene-1,4-diol + AH2 + O2 = a 3-demethylubiquinol + A + H2O. Its pathway is cofactor biosynthesis; ubiquinone biosynthesis. Catalyzes the hydroxylation of 2-nonaprenyl-3-methyl-6-methoxy-1,4-benzoquinol during ubiquinone biosynthesis. The chain is 3-demethoxyubiquinol 3-hydroxylase from Pseudomonas putida (strain W619).